The sequence spans 883 residues: Putative GTP diphosphokinase RSH1, chloroplastic (883 aa).

The transit peptide at 1–55 (MTSASSMSVSVECVNICNLTKGDGNARSDCSALSCAWKAPRALTGFLASTAHPPV) directs the protein to the chloroplast. The 108-residue stretch at 172 to 279 (FIIHPVAVAR…VKLADRLHNM (108 aa)) folds into the HD domain. The region spanning 562-625 (LGSRVFVFTP…ENAEVVEIVT (64 aa)) is the TGS domain. Over residues 710–726 (QSQDKSRDTTPAPQNGS) the composition is skewed to polar residues. Residues 710 to 746 (QSQDKSRDTTPAPQNGSVWAPKVNGKHNKAIKNSSSD) form a disordered region. The 72-residue stretch at 796–867 (WLCVVSMDRK…LVLGVLGWSS (72 aa)) folds into the ACT domain.

Belongs to the RelA/SpoT family. In terms of assembly, interacts with RPP5.

Its subcellular location is the plastid. The protein resides in the chloroplast. It catalyses the reaction GTP + ATP = guanosine 3'-diphosphate 5'-triphosphate + AMP. In terms of biological role, may be involved in a rapid plant ppGpp (guanosine 3'-diphosphate 5'-diphosphate)-mediated response to pathogens and other stresses. The polypeptide is Putative GTP diphosphokinase RSH1, chloroplastic (RSH1) (Arabidopsis thaliana (Mouse-ear cress)).